An 895-amino-acid chain; its full sequence is Androgen receptor (895 aa).

The segment at 1-533 (MEVQLGLGRV…PIDYYFPPQK (533 aa)) is modulating. An interaction with ZNF318 region spans residues 1–562 (MEVQLGLGRV…GSCKVFFKRA (562 aa)). Disordered regions lie at residues 33–155 (VIQN…PTFP) and 175–211 (QLLQ…YLGG). Low complexity-rich tracts occupy residues 44–81 (AASA…GSPQ) and 175–200 (QLLQ…ASGA). S66 carries the phosphoserine; by CDK9 modification. S79 is modified (phosphoserine). Polar residues predominate over residues 201–211 (PTSSKDNYLGG). Phosphotyrosine; by CSK is present on Y208. Position 241 is a phosphoserine (S241). Residue Y252 is modified to Phosphotyrosine; by CSK and TNK2. Phosphotyrosine; by CSK occurs at positions 292, 331, 342, and 347. Residue Y348 is modified to Phosphotyrosine; by CSK and TNK2. K371 participates in a covalent cross-link: Glycyl lysine isopeptide (Lys-Gly) (interchain with G-Cter in SUMO). Y378 is modified (phosphotyrosine; by CSK). K496 participates in a covalent cross-link: Glycyl lysine isopeptide (Lys-Gly) (interchain with G-Cter in SUMO). A phosphotyrosine; by CSK mark is found at Y510 and Y527. The interval 527–894 (YYFPPQKTCL…GKVKPIYFHT (368 aa)) is interaction with LPXN. The nuclear receptor DNA-binding region spans 534 to 607 (TCLICGDEAS…AGMTLGARKL (74 aa)). 2 NR C4-type zinc fingers span residues 535 to 555 (CLIC…CGSC) and 571 to 595 (CASR…LRKC). Residues 547–637 (YGALTCGSCK…TEETAQKLTV (91 aa)) are interaction with HIPK3. The interval 567-894 (QKYLCASRND…GKVKPIYFHT (328 aa)) is interaction with CCAR1. Positions 600 to 894 (MTLGARKLKK…GKVKPIYFHT (295 aa)) are interaction with KAT7. S626 carries the phosphoserine; by STK4/MST1 modification. The 232-residue stretch at 644–875 (ECQPIFLNVL…DFPEMMAEII (232 aa)) folds into the NR LBD domain. The 17beta-hydroxy-5alpha-androstan-3-one site is built by N681 and R728. Residues K821 and K823 each participate in a glycyl lysine isopeptide (Lys-Gly) (interchain with G-Cter in ubiquitin) cross-link. T853 serves as a coordination point for 17beta-hydroxy-5alpha-androstan-3-one. Y891 carries the phosphotyrosine; by CSK modification.

Belongs to the nuclear hormone receptor family. NR3 subfamily. Binds DNA as a homodimer. Part of a ternary complex containing AR, EFCAB6/DJBP and PARK7. Interacts with HIPK3 and NR0B2 in the presence of androgen. The ligand binding domain interacts with KAT7/HBO1 in the presence of dihydrotestosterone. Interacts with EFCAB6/DJBP, PQBP1, RANBP9, RBAK, SPDEF, SRA1, TGFB1I1 and RREB1. Interacts with ZMIZ1/ZIMP10 and ZMIZ2/ZMIP7 which both enhance its transactivation activity. Interacts with SLC30A9 and RAD54L2/ARIP4. Interacts with MACROD1 (via macro domain). Interacts via the ligand-binding domain with LXXLL and FXXLF motifs from NCOA1, NCOA2, NCOA3 and MAGEA11. Interacts (via nuclear receptor DNA binding domain and nuclear receptor ligand binding domain) with NCOA4. The AR N-terminal poly-Gln region binds Ran resulting in enhancement of AR-mediated transactivation. Ran-binding decreases as the poly-Gln length increases. Interacts with HIP1 (via coiled coil domain). Interacts (via ligand-binding domain) with TRIM68. Interacts with TNK2. Interacts with USP26. Interacts with RNF6. Interacts (regulated by RNF6 probably through polyubiquitination) with RNF14; regulates AR transcriptional activity. Interacts with PRMT2 and TRIM24. Interacts with RACK1. Interacts with RANBP10; this interaction enhances dihydrotestosterone-induced AR transcriptional activity. Interacts with PRPF6 in a hormone-independent way; this interaction enhances dihydrotestosterone-induced AR transcriptional activity. Interacts with STK4/MST1. Interacts with ZIPK/DAPK3. Interacts with LPXN. Interacts with MAK. Part of a complex containing AR, MAK and NCOA3. Interacts with CRY1. Interacts with CCAR1 and GATA2. Interacts with ZNF318. Interacts with BUD31. Interacts with ARID4A. Interacts with ARID4B. Interacts (via NR LBD domain) with ZBTB7A; the interaction is direct and androgen-dependent. Interacts with NCOR1. Interacts with NCOR2. Interacts with CRY2 in a ligand-dependent manner. Phosphorylated in prostate cancer cells in response to several growth factors including EGF. Phosphorylation is induced by c-Src kinase (CSK). Tyr-510 is one of the major phosphorylation sites and an increase in phosphorylation and Src kinase activity is associated with prostate cancer progression. Phosphorylation by TNK2 enhances the DNA-binding and transcriptional activity. Phosphorylation at Ser-66 by CDK9 regulates AR promoter selectivity and cell growth. Post-translationally, sumoylated on Lys-371 (major) and Lys-496. Ubiquitinated. Deubiquitinated by USP26. 'Lys-6' and 'Lys-27'-linked polyubiquitination by RNF6 modulates AR transcriptional activity and specificity. In terms of processing, palmitoylated by ZDHHC7 and ZDHHC21. Palmitoylation is required for plasma membrane targeting and for rapid intracellular signaling via ERK and AKT kinases and cAMP generation.

It localises to the nucleus. The protein resides in the cytoplasm. Functionally, steroid hormone receptors are ligand-activated transcription factors that regulate eukaryotic gene expression and affect cellular proliferation and differentiation in target tissues. Transcription factor activity is modulated by bound coactivator and corepressor proteins like ZBTB7A that recruits NCOR1 and NCOR2 to the androgen response elements/ARE on target genes, negatively regulating androgen receptor signaling and androgen-induced cell proliferation. Transcription activation is also down-regulated by NR0B2. Activated, but not phosphorylated, by HIPK3 and ZIPK/DAPK3. The protein is Androgen receptor (AR) of Papio hamadryas (Hamadryas baboon).